A 378-amino-acid chain; its full sequence is Ribosomal RNA large subunit methyltransferase G (378 aa).

This sequence belongs to the methyltransferase superfamily. RlmG family.

It is found in the cytoplasm. It carries out the reaction guanosine(1835) in 23S rRNA + S-adenosyl-L-methionine = N(2)-methylguanosine(1835) in 23S rRNA + S-adenosyl-L-homocysteine + H(+). In terms of biological role, specifically methylates the guanine in position 1835 (m2G1835) of 23S rRNA. This chain is Ribosomal RNA large subunit methyltransferase G, found in Salmonella gallinarum (strain 287/91 / NCTC 13346).